The sequence spans 230 residues: Orotidine 5'-phosphate decarboxylase (230 aa).

Substrate is bound by residues D10, K31, 58-67 (DLKLHDIPNT), T117, R179, Q188, G208, and R209. K60 acts as the Proton donor in catalysis.

It belongs to the OMP decarboxylase family. Type 1 subfamily. Homodimer.

The enzyme catalyses orotidine 5'-phosphate + H(+) = UMP + CO2. It functions in the pathway pyrimidine metabolism; UMP biosynthesis via de novo pathway; UMP from orotate: step 2/2. Functionally, catalyzes the decarboxylation of orotidine 5'-monophosphate (OMP) to uridine 5'-monophosphate (UMP). In Staphylococcus haemolyticus (strain JCSC1435), this protein is Orotidine 5'-phosphate decarboxylase.